A 427-amino-acid chain; its full sequence is L-threonine dehydratase biosynthetic IlvA (427 aa).

Lys63 is modified (N6-(pyridoxal phosphate)lysine). Pyridoxal 5'-phosphate-binding positions include Asn90, 193–197 (GGGGC), and Ser319. Residues 343–417 (HYFLVDFPQK…TEMHVETLQP (75 aa)) enclose the ACT-like domain.

This sequence belongs to the serine/threonine dehydratase family. Homotetramer. Pyridoxal 5'-phosphate serves as cofactor.

The enzyme catalyses L-threonine = 2-oxobutanoate + NH4(+). It functions in the pathway amino-acid biosynthesis; L-isoleucine biosynthesis; 2-oxobutanoate from L-threonine: step 1/1. Catalyzes the anaerobic formation of alpha-ketobutyrate and ammonia from threonine in a two-step reaction. The first step involved a dehydration of threonine and a production of enamine intermediates (aminocrotonate), which tautomerizes to its imine form (iminobutyrate). Both intermediates are unstable and short-lived. The second step is the nonenzymatic hydrolysis of the enamine/imine intermediates to form 2-ketobutyrate and free ammonia. In the low water environment of the cell, the second step is accelerated by RidA. In Mycobacterium leprae (strain TN), this protein is L-threonine dehydratase biosynthetic IlvA (ilvA).